A 600-amino-acid polypeptide reads, in one-letter code: Elongation factor 4 (600 aa).

The tr-type G domain occupies Lys4–Leu187. Residues Asp16 to Thr21 and Asn134 to Asp137 each bind GTP.

It belongs to the TRAFAC class translation factor GTPase superfamily. Classic translation factor GTPase family. LepA subfamily.

The protein resides in the cell membrane. The catalysed reaction is GTP + H2O = GDP + phosphate + H(+). Functionally, required for accurate and efficient protein synthesis under certain stress conditions. May act as a fidelity factor of the translation reaction, by catalyzing a one-codon backward translocation of tRNAs on improperly translocated ribosomes. Back-translocation proceeds from a post-translocation (POST) complex to a pre-translocation (PRE) complex, thus giving elongation factor G a second chance to translocate the tRNAs correctly. Binds to ribosomes in a GTP-dependent manner. The chain is Elongation factor 4 from Malacoplasma penetrans (strain HF-2) (Mycoplasma penetrans).